The primary structure comprises 25 residues: Caerin-1.2 (25 aa).

Leucine amide is present on Leu25.

Expressed by the skin parotoid and/or rostral glands.

The protein resides in the secreted. In terms of biological role, antibacterial peptide, that adopts an alpha helical conformation which can disrupt bacterial membranes. Each caerin displays a different antimicrobial specificity. The polypeptide is Caerin-1.2 (Ranoidea caerulea (Green tree frog)).